Reading from the N-terminus, the 116-residue chain is SPbeta prophage-derived uncharacterized protein YomQ (116 aa).

The chain is SPbeta prophage-derived uncharacterized protein YomQ (yomQ) from Bacillus subtilis (strain 168).